The primary structure comprises 587 residues: Probable phosphoribomutase (587 aa).

Substrate is bound by residues threonine 49, arginine 53, and 149 to 150; that span reads SH. The active-site Phosphoserine intermediate is the serine 149. Residues serine 149, aspartate 306, aspartate 308, and aspartate 310 each coordinate Mg(2+). At serine 149 the chain carries Phosphoserine. Substrate contacts are provided by residues 310-311, threonine 380, 404-406, and lysine 418; these read DR and EEA.

Belongs to the phosphohexose mutase family. Requires Mg(2+) as cofactor.

It localises to the cytoplasm. Its subcellular location is the nucleus. It carries out the reaction alpha-D-ribose 1-phosphate = D-ribose 5-phosphate. Converts ribose 1-phosphate to ribose 5-phosphate. Involved in ribose salvage via the pentose phosphate pathway. In Schizosaccharomyces pombe (strain 972 / ATCC 24843) (Fission yeast), this protein is Probable phosphoribomutase.